Consider the following 310-residue polypeptide: tRNA dimethylallyltransferase (310 aa).

10 to 17 (GPTAVGKS) is a binding site for ATP. 12–17 (TAVGKS) contributes to the substrate binding site. The tract at residues 35 to 38 (DSMQ) is interaction with substrate tRNA.

It belongs to the IPP transferase family. In terms of assembly, monomer. It depends on Mg(2+) as a cofactor.

It carries out the reaction adenosine(37) in tRNA + dimethylallyl diphosphate = N(6)-dimethylallyladenosine(37) in tRNA + diphosphate. Functionally, catalyzes the transfer of a dimethylallyl group onto the adenine at position 37 in tRNAs that read codons beginning with uridine, leading to the formation of N6-(dimethylallyl)adenosine (i(6)A). This chain is tRNA dimethylallyltransferase, found in Clostridium perfringens (strain SM101 / Type A).